Consider the following 209-residue polypeptide: Probable GTP-binding protein EngB (209 aa).

An EngB-type G domain is found at 12–203 (VSFEIIFVGR…RDRLHEMKRD (192 aa)). GTP-binding positions include 20–27 (GRSNVGKS), 45–49 (GVTLR), 62–65 (DMPG), 142–145 (NKMD), and 179–181 (ISA). Positions 27 and 47 each coordinate Mg(2+).

This sequence belongs to the TRAFAC class TrmE-Era-EngA-EngB-Septin-like GTPase superfamily. EngB GTPase family. Requires Mg(2+) as cofactor.

Functionally, necessary for normal cell division and for the maintenance of normal septation. In Methanosarcina barkeri (strain Fusaro / DSM 804), this protein is Probable GTP-binding protein EngB.